The chain runs to 230 residues: uncharacterized protein (230 aa).

Residues 1–11 show a composition bias toward polar residues; that stretch reads MPVPSVTVTTD. The interval 1-88 is disordered; it reads MPVPSVTVTT…TLKRPTSNSI (88 aa). Positions 63–73 are enriched in basic and acidic residues; the sequence is DDQHRHSDVHS. The span at 79–88 shows a compositional bias: polar residues; sequence TLKRPTSNSI. Serine 106 is modified (phosphoserine). Basic and acidic residues predominate over residues 156–179; that stretch reads LKREDSRVSSTKKEHINDHTDMHS. Residues 156–203 form a disordered region; sequence LKREDSRVSSTKKEHINDHTDMHSTRSKVTTNSQGSSLEPNKLNMAVE. Positions 182–194 are enriched in polar residues; that stretch reads SKVTTNSQGSSLE.

This is an uncharacterized protein from Saccharomyces cerevisiae (strain ATCC 204508 / S288c) (Baker's yeast).